Reading from the N-terminus, the 343-residue chain is RNA-binding protein 43 (343 aa).

In terms of domain architecture, RRM spans 15–90 (RTVVVSGLPV…PLLTVSHFSE (76 aa)). The interval 170–200 (RRNWTGQNPRRVLQKNENSAPTLGTSVPEPA) is disordered. The span at 184-194 (KNENSAPTLGT) shows a compositional bias: polar residues.

The protein is RNA-binding protein 43 (Rbm43) of Rattus norvegicus (Rat).